A 257-amino-acid polypeptide reads, in one-letter code: uncharacterized protein (257 aa).

Residues 6–26 (IFWLNLAAIIIISIVVSGGMF) form a helical membrane-spanning segment.

It belongs to the staphylococcal tandem lipoprotein family.

It is found in the cell membrane. This is an uncharacterized protein from Staphylococcus aureus (strain Mu50 / ATCC 700699).